The following is a 431-amino-acid chain: Serine--tRNA ligase (431 aa).

Residue 238 to 240 (TAE) participates in L-serine binding. 269–271 (RSE) lines the ATP pocket. Glutamate 292 serves as a coordination point for L-serine. 356–359 (EISS) contacts ATP. Serine 392 serves as a coordination point for L-serine.

This sequence belongs to the class-II aminoacyl-tRNA synthetase family. Type-1 seryl-tRNA synthetase subfamily. In terms of assembly, homodimer. The tRNA molecule binds across the dimer.

The protein resides in the cytoplasm. It catalyses the reaction tRNA(Ser) + L-serine + ATP = L-seryl-tRNA(Ser) + AMP + diphosphate + H(+). The catalysed reaction is tRNA(Sec) + L-serine + ATP = L-seryl-tRNA(Sec) + AMP + diphosphate + H(+). The protein operates within aminoacyl-tRNA biosynthesis; selenocysteinyl-tRNA(Sec) biosynthesis; L-seryl-tRNA(Sec) from L-serine and tRNA(Sec): step 1/1. In terms of biological role, catalyzes the attachment of serine to tRNA(Ser). Is also able to aminoacylate tRNA(Sec) with serine, to form the misacylated tRNA L-seryl-tRNA(Sec), which will be further converted into selenocysteinyl-tRNA(Sec). The sequence is that of Serine--tRNA ligase from Pectobacterium atrosepticum (strain SCRI 1043 / ATCC BAA-672) (Erwinia carotovora subsp. atroseptica).